The following is a 496-amino-acid chain: Zinc finger protein PLAGL2 (496 aa).

6 C2H2-type zinc fingers span residues 68 to 92 (YSCP…MATH), 98 to 120 (HQCM…LQTH), 127 to 149 (LHCS…LAMH), 156 to 178 (LSCK…LKAH), 191 to 213 (HPCD…LVVH), and 219 to 242 (FLCQ…KKSH).

Belongs to the krueppel C2H2-type zinc-finger protein family.

The protein localises to the nucleus. Functionally, shows weak transcriptional activatory activity. The sequence is that of Zinc finger protein PLAGL2 (PLAGL2) from Homo sapiens (Human).